Reading from the N-terminus, the 280-residue chain is 2-dehydro-3-deoxyphosphooctonate aldolase (280 aa).

This sequence belongs to the KdsA family.

The protein resides in the cytoplasm. It carries out the reaction D-arabinose 5-phosphate + phosphoenolpyruvate + H2O = 3-deoxy-alpha-D-manno-2-octulosonate-8-phosphate + phosphate. The protein operates within carbohydrate biosynthesis; 3-deoxy-D-manno-octulosonate biosynthesis; 3-deoxy-D-manno-octulosonate from D-ribulose 5-phosphate: step 2/3. It participates in bacterial outer membrane biogenesis; lipopolysaccharide biosynthesis. The protein is 2-dehydro-3-deoxyphosphooctonate aldolase of Nitrosococcus oceani (strain ATCC 19707 / BCRC 17464 / JCM 30415 / NCIMB 11848 / C-107).